We begin with the raw amino-acid sequence, 1816 residues long: uncharacterized protein (1816 aa).

Disordered stretches follow at residues 338–357 (DSSS…NNNN) and 562–605 (ELEK…IKPK). A compositionally biased stretch (low complexity) spans 339 to 357 (SSSSSSNNNNNNNNNNNNN). A compositionally biased stretch (basic and acidic residues) spans 562 to 577 (ELEKERIKKEKEDSKK). Residues 581-603 (KQSSSSSSSSTTTTSTTTSSTIK) are compositionally biased toward low complexity. The 174-residue stretch at 826-999 (LDIVDKRESA…FLKKIDPNRK (174 aa)) folds into the Helicase ATP-binding domain. 839 to 846 (ASTSSGKT) is an ATP binding site. The short motif at 949 to 952 (DEVH) is the DEAH box element. Residues 1198–1379 (QLDLVIERFQ…SVVSPSLCLS (182 aa)) form the Helicase C-terminal domain. The disordered stretch occupies residues 1388–1487 (TNGSANKSNE…TTTKTPTTTS (100 aa)). Basic and acidic residues predominate over residues 1395-1427 (SNEENKVQVKENEKEREKEKEKEKEKEKEKETI). The segment covering 1445-1454 (NWDDDEEETA) has biased composition (acidic residues). Residues 1456-1487 (STKTTPATTPTTTTTENTPATTTTTKTPTTTS) show a composition bias toward low complexity.

The protein belongs to the helicase family. SKI2 subfamily.

The protein resides in the nucleus. This is an uncharacterized protein from Dictyostelium discoideum (Social amoeba).